The sequence spans 307 residues: Mitochondrial thiamine pyrophosphate carrier 1 (307 aa).

3 Solcar repeats span residues 13-95 (VSTT…IGSF), 105-190 (SPQL…IKIF), and 203-305 (PFTL…FMNK). The next 6 helical transmembrane spans lie at 19-36 (LVAGSLSGLFARTCIAPL), 76-96 (IMYIIYGGAQFGSYTYIGSFL), 108-126 (LYSCLVGSLAGMTSSLASY), 160-184 (MGFFSGCGSSMINIGLNTAIMFGVY), 210-226 (LAGPISGFTSKLATFPL), and 280-297 (GVTMSLIKSVPSTAISLW).

Belongs to the mitochondrial carrier (TC 2.A.29) family.

Its subcellular location is the mitochondrion inner membrane. In terms of biological role, mitochondrial transporter that mediates uptake of thiamine pyrophosphate (ThPP) into mitochondria. The sequence is that of Mitochondrial thiamine pyrophosphate carrier 1 (TPC1) from Candida glabrata (strain ATCC 2001 / BCRC 20586 / JCM 3761 / NBRC 0622 / NRRL Y-65 / CBS 138) (Yeast).